We begin with the raw amino-acid sequence, 99 residues long: Putative UPF0320 protein YDR543C (99 aa).

The disordered stretch occupies residues 80 to 99 (EKSPPKSPKHKNILSFNNNT).

This sequence belongs to the UPF0320 family.

In Saccharomyces cerevisiae (strain ATCC 204508 / S288c) (Baker's yeast), this protein is Putative UPF0320 protein YDR543C.